Here is a 426-residue protein sequence, read N- to C-terminus: UDP-N-acetylglucosamine--N-acetylmuramyl-(pentapeptide) pyrophosphoryl-undecaprenol N-acetylglucosamine transferase (426 aa).

Residues 28–30 (TGG), N140, R176, S204, I257, and Q302 each bind UDP-N-acetyl-alpha-D-glucosamine. Positions 369 to 388 (AGNGPSGMGNGHSSEQPQER) are disordered.

Belongs to the glycosyltransferase 28 family. MurG subfamily.

It is found in the cell inner membrane. It catalyses the reaction di-trans,octa-cis-undecaprenyl diphospho-N-acetyl-alpha-D-muramoyl-L-alanyl-D-glutamyl-meso-2,6-diaminopimeloyl-D-alanyl-D-alanine + UDP-N-acetyl-alpha-D-glucosamine = di-trans,octa-cis-undecaprenyl diphospho-[N-acetyl-alpha-D-glucosaminyl-(1-&gt;4)]-N-acetyl-alpha-D-muramoyl-L-alanyl-D-glutamyl-meso-2,6-diaminopimeloyl-D-alanyl-D-alanine + UDP + H(+). It functions in the pathway cell wall biogenesis; peptidoglycan biosynthesis. Its function is as follows. Cell wall formation. Catalyzes the transfer of a GlcNAc subunit on undecaprenyl-pyrophosphoryl-MurNAc-pentapeptide (lipid intermediate I) to form undecaprenyl-pyrophosphoryl-MurNAc-(pentapeptide)GlcNAc (lipid intermediate II). This Xanthomonas axonopodis pv. citri (strain 306) protein is UDP-N-acetylglucosamine--N-acetylmuramyl-(pentapeptide) pyrophosphoryl-undecaprenol N-acetylglucosamine transferase.